A 628-amino-acid polypeptide reads, in one-letter code: tRNA (carboxymethyluridine(34)-5-O)-methyltransferase alkbh8 (628 aa).

Residues 43–123 (QSLVVANGGL…ITLYLSFVEK (81 aa)) enclose the RRM domain. One can recognise a Fe2OG dioxygenase domain in the interval 218–335 (DPDQLTINQY…RTSFTFRKVR (118 aa)). Residue 225–227 (NQY) coordinates 2-oxoglutarate. Positions 236 and 238 each coordinate Fe cation. Residue His240 participates in Zn(2+) binding. His290 serves as a coordination point for Fe cation. Residues Arg326 and Arg332 each contribute to the 2-oxoglutarate site. Residues Cys339, Cys341, and Cys347 each coordinate Zn(2+). Residues 410-628 (ADVGCGNGKY…GNWCVILEKL (219 aa)) form a methyltransferase domain region. The tract at residues 563 to 582 (PTNKSKVTPENKEQNEKEHG) is disordered. Over residues 569-582 (VTPENKEQNEKEHG) the composition is skewed to basic and acidic residues.

It belongs to the alkB family. Fe(2+) serves as cofactor.

It is found in the cytoplasm. It localises to the nucleus. It carries out the reaction 5-(carboxymethyl)uridine(34) in tRNA + S-adenosyl-L-methionine = 5-(2-methoxy-2-oxoethyl)uridine(34) in tRNA + S-adenosyl-L-homocysteine. In terms of biological role, catalyzes the methylation of 5-carboxymethyl uridine to 5-methylcarboxymethyl uridine at the wobble position of the anticodon loop in tRNA via its methyltransferase domain. Catalyzes the last step in the formation of 5-methylcarboxymethyl uridine at the wobble position of the anticodon loop in target tRNA. Has a preference for tRNA(Arg) and tRNA(Glu), and does not bind tRNA(Lys). Binds tRNA and catalyzes the iron and alpha-ketoglutarate dependent hydroxylation of 5-methylcarboxymethyl uridine at the wobble position of the anticodon loop in tRNA via its dioxygenase domain, giving rise to 5-(S)-methoxycarbonylhydroxymethyluridine; has a preference for tRNA(Gly). Required for normal survival after DNA damage. May inhibit apoptosis and promote cell survival and angiogenesis. The protein is tRNA (carboxymethyluridine(34)-5-O)-methyltransferase alkbh8 (alkbh8) of Xenopus tropicalis (Western clawed frog).